A 226-amino-acid polypeptide reads, in one-letter code: ATP-dependent dethiobiotin synthetase BioD (226 aa).

Residue 12-17 (GIGKTV) participates in ATP binding. T16 contacts Mg(2+). The active site involves K37. T41 contributes to the substrate binding site. ATP-binding positions include D49, 108–111 (EGAG), and 197–199 (PAG). D49 and E108 together coordinate Mg(2+).

Belongs to the dethiobiotin synthetase family. As to quaternary structure, homodimer. Requires Mg(2+) as cofactor.

It localises to the cytoplasm. It carries out the reaction (7R,8S)-7,8-diammoniononanoate + CO2 + ATP = (4R,5S)-dethiobiotin + ADP + phosphate + 3 H(+). It functions in the pathway cofactor biosynthesis; biotin biosynthesis; biotin from 7,8-diaminononanoate: step 1/2. In terms of biological role, catalyzes a mechanistically unusual reaction, the ATP-dependent insertion of CO2 between the N7 and N8 nitrogen atoms of 7,8-diaminopelargonic acid (DAPA, also called 7,8-diammoniononanoate) to form a ureido ring. This is ATP-dependent dethiobiotin synthetase BioD from Mycolicibacterium vanbaalenii (strain DSM 7251 / JCM 13017 / BCRC 16820 / KCTC 9966 / NRRL B-24157 / PYR-1) (Mycobacterium vanbaalenii).